The primary structure comprises 352 residues: RING finger protein 39 (352 aa).

Residues Cys20–Gly67 form an RING-type zinc finger. A disordered region spans residues Pro98–Pro118. The B30.2/SPRY domain occupies Glu142–Ala352.

In terms of tissue distribution, expressed in the hippocampus. Expression is rapidly up-regulated in granule cells of the dentate gyrus after LTP induction.

The protein resides in the cytoplasm. The catalysed reaction is S-ubiquitinyl-[E2 ubiquitin-conjugating enzyme]-L-cysteine + [acceptor protein]-L-lysine = [E2 ubiquitin-conjugating enzyme]-L-cysteine + N(6)-ubiquitinyl-[acceptor protein]-L-lysine.. It participates in protein modification; protein ubiquitination. Functionally, plays an inhibitory role in anti-RNA viral innate immunity by targeting the adapter DDX3X and promoting its 'Lys-48'-linked polyubiquitination. Alternatively, enhances the cGAS-STING pathway activation by promoting 'Lys-63'-linked ubiquitination of STING1, facilitating the STING1-TBK1 complex formation and STING1 activation. The chain is RING finger protein 39 (Rnf39) from Rattus norvegicus (Rat).